We begin with the raw amino-acid sequence, 520 residues long: Transactivator/viroplasmin protein (520 aa).

The tract at residues 487–520 is disordered; sequence QNASADSGPKDGPPPTRSIVEKEDVPTTSSKQVD.

The protein belongs to the caulimoviridae viroplasmin family.

Its subcellular location is the host cytoplasm. Its function is as follows. Enhances the ribosomal termination-reinitiation event leading to the translation of major open reading frames on the polycistronic viral RNAs. This Arabidopsis thaliana (Mouse-ear cress) protein is Transactivator/viroplasmin protein.